The primary structure comprises 504 residues: Maturase K (504 aa).

Belongs to the intron maturase 2 family. MatK subfamily.

It localises to the plastid. The protein resides in the chloroplast. Usually encoded in the trnK tRNA gene intron. Probably assists in splicing its own and other chloroplast group II introns. In Cynophalla hastata (Broadleaf caper), this protein is Maturase K.